The chain runs to 556 residues: Serine beta-lactamase-like protein LACTB, mitochondrial (556 aa).

Residues 1 to 117 (MYRLLSAVMA…RAIDSSRDLL (117 aa)) constitute a mitochondrion transit peptide. The active-site Acyl-ester intermediate is the serine 166. Over residues 249–282 (ESDQEKELKEKGGKSNEKNDFAKAKVEQDNETKG) the composition is skewed to basic and acidic residues. Positions 249–290 (ESDQEKELKEKGGKSNEKNDFAKAKVEQDNETKGRNSKPCKK) are disordered. N6-succinyllysine occurs at positions 290 and 291. Lysine 304 and lysine 349 each carry N6-acetyllysine.

Belongs to the peptidase S12 family.

Its subcellular location is the mitochondrion. In terms of biological role, mitochondrial serine protease that acts as a regulator of mitochondrial lipid metabolism. Acts by decreasing protein levels of PISD, a mitochondrial enzyme that converts phosphatidylserine (PtdSer) to phosphatidylethanolamine (PtdEtn), thereby affecting mitochondrial lipid metabolism. It is unclear whether it acts directly by mediating proteolysis of PISD or by mediating proteolysis of another lipid metabolism protein. The protein is Serine beta-lactamase-like protein LACTB, mitochondrial of Bos taurus (Bovine).